Reading from the N-terminus, the 60-residue chain is Lantibiotic Pep5 (60 aa).

A propeptide spanning residues 1-26 (MKNNKNLFDLEIKKETSQNTDELEPQ) is cleaved from the precursor. Residues 1 to 29 (MKNNKNLFDLEIKKETSQNTDELEPQTAG) form a disordered region. A 2-oxobutanoic acid modification is found at Thr-27. The segment at residues 35 to 39 (SVKQC) is a cross-link (lanthionine (Ser-Cys)). 2,3-didehydrobutyrine occurs at positions 42 and 46. The beta-methyllanthionine (Thr-Cys) cross-link spans 50 to 53 (TVSC). The lanthionine (Ser-Cys) cross-link spans 52–59 (SCKGKNGC).

This sequence belongs to the type A lantibiotic family. Post-translationally, maturation of lantibiotics involves the enzymatic conversion of Thr, and Ser into dehydrated AA and the formation of thioether bonds with cysteine. This is followed by membrane translocation and cleavage of the modified precursor. In terms of processing, after proteolysis of the propeptide, the N-terminal 2,3-didehydrobutyrine hydrolyzes to 2-oxobutanoic acid, possibly spontaneously.

Its function is as follows. Lanthionine-containing peptide antibiotic (lantibiotic) active on Gram-positive bacteria. The bactericidal activity of lantibiotics is based on depolarization of energized bacterial cytoplasmic membranes, initiated by the formation of aqueous transmembrane pores. This is Lantibiotic Pep5 (pepA) from Staphylococcus epidermidis.